The primary structure comprises 377 residues: Diels-Alderase fsa2 (377 aa).

It belongs to the Diels-Alderase family.

It catalyses the reaction (5S)-3-[(2E,6R,8E,10E,12E)-2,6-dimethyltetradeca-2,8,10,12-tetraenoyl]-5-(hydroxymethyl)pyrrolidine-2,4-dione = trichosetin. It participates in mycotoxin biosynthesis. Diels-Alderase; part of the gene cluster that mediates the biosynthesis of equisetin, a trans-fused decalin-containing tetramic acid with antimicrobial activity. The PKS module of eqxS together with the enoylreductase eqxC catalyze the formation of the polyketide unit which is then conjugated to L-serine by the condensation domain of the eqxS NRPS module. Activity of the Dieckmann cyclase domain (RED) results in release of the Dieckmann product intermediate. Diels-Alderase eqx3 is involved in endo-selective Diels-Alder cycloaddition to form the decalin ring, leading to the production of N-desmethylequisetin also called trichosetin. Subsequent N-methylation is carried out by eqxD to give equisetin. The sequence is that of Diels-Alderase fsa2 from Fusarium heterosporum.